Consider the following 75-residue polypeptide: UPF0270 protein PSPTO_1630 (75 aa).

It belongs to the UPF0270 family.

The polypeptide is UPF0270 protein PSPTO_1630 (Pseudomonas syringae pv. tomato (strain ATCC BAA-871 / DC3000)).